Here is a 776-residue protein sequence, read N- to C-terminus: Glucocorticoid receptor (776 aa).

Positions 1 to 11 (MDSKESLTSPS) are enriched in polar residues. Residues 1–25 (MDSKESLTSPSEEIPSSVHGQERGN) form a disordered region. Positions 1–419 (MDSKESLTSP…LSAVGPPPKF (419 aa)) are modulating. T8 is modified (phosphothreonine). R23 is subject to Omega-N-methylarginine. Residues S45, S113, and S134 each carry the phosphoserine modification. Residues 157 to 178 (PETPSDVSSEQQNLKGQTGTNG) form a disordered region. Over residues 161-174 (SDVSSEQQNLKGQT) the composition is skewed to polar residues. Phosphoserine occurs at positions 203, 211, and 226. A Glycyl lysine isopeptide (Lys-Gly) (interchain with G-Cter in SUMO2) cross-link involves residue K258. S267 carries the post-translational modification Phosphoserine. Residues K277 and K293 each participate in a glycyl lysine isopeptide (Lys-Gly) (interchain with G-Cter in SUMO); alternate cross-link. Residues K277 and K293 each participate in a glycyl lysine isopeptide (Lys-Gly) (interchain with G-Cter in SUMO2); alternate cross-link. A phosphoserine mark is found at S307 and S404. Positions 417–492 (PKFCLVCSDE…AGMNLEARKT (76 aa)) form a DNA-binding region, nuclear receptor. K418 participates in a covalent cross-link: Glycyl lysine isopeptide (Lys-Gly) (interchain with G-Cter in ubiquitin). NR C4-type zinc fingers lie at residues 420–440 (CLVC…CGSC) and 456–480 (CAGR…YRKC). 4 positions are modified to N6-acetyllysine: K479, K491, K493, and K494. The interval 484 to 776 (GMNLEARKTK…NIKKLLFHQK (293 aa)) is interaction with CLOCK. Residues 486–522 (NLEARKTKKKIKGIQQTTTGISQETPENSANKTIVPA) are hinge. Positions 523-757 (TLPQLTPTPV…FPEMLAEIIT (235 aa)) constitute an NR LBD domain. Residues 531-696 (PVSLLEVIEP…EIRMTYIKEL (166 aa)) form an interaction with CRY1 region. K702 participates in a covalent cross-link: Glycyl lysine isopeptide (Lys-Gly) (interchain with G-Cter in SUMO).

The protein belongs to the nuclear hormone receptor family. NR3 subfamily. In terms of assembly, heteromultimeric cytoplasmic complex with HSP90AA1, HSPA1A/HSPA1B, and FKBP5 or another immunophilin such as PPID, STIP1, or the immunophilin homolog PPP5C. Upon ligand binding FKBP5 dissociates from the complex and FKBP4 takes its place, thereby linking the complex to dynein and mediating transport to the nucleus, where the complex dissociates. Probably forms a complex composed of chaperones HSP90 and HSP70, co-chaperones CDC37, PPP5C, TSC1 and client protein TSC2, CDK4, AKT, RAF1 and NR3C1; this complex does not contain co-chaperones STIP1/HOP and PTGES3/p23. Directly interacts with UNC45A. Binds to DNA as a homodimer, and as heterodimer with NR3C2 or the retinoid X receptor. Binds STAT5A and STAT5B homodimers and heterodimers. Interacts with NRIP1, POU2F1, POU2F2 and TRIM28. Interacts with several coactivator complexes, including the SMARCA4 complex, CREBBP/EP300, TADA2L (Ada complex) and p160 coactivators such as NCOA2 and NCOA6. Interaction with BAG1 inhibits transactivation. Interacts with HEXIM1 and TGFB1I1. Interacts with NCOA1. Interacts with NCOA3, SMARCA4, SMARCC1, SMARCD1, and SMARCE1. Interacts with CLOCK, CRY1 and CRY2 in a ligand-dependent fashion. Interacts with CIART. Interacts with RWDD3. Interacts with UBE2I/UBC9 and this interaction is enhanced in the presence of RWDD3. Interacts with GRIP1. Interacts with NR4A3 (via nuclear receptor DNA-binding domain), represses transcription activity of NR4A3 on the POMC promoter Nur response element (NurRE). Directly interacts with PNRC2 to attract and form a complex with UPF1 and DCP1A; the interaction leads to rapid mRNA degradation. Interacts with GSK3B. Interacts with FNIP1 and FNIP2. Interacts (via C-terminus) with NR3C1 (via C-terminus). Interacts with MCM3AP. Interacts (via domain NR LBD) with HSP90AA1 and HSP90AB1. In the absence of hormonal ligand, interacts with TACC1. Acetylation by CLOCK reduces its binding to glucocorticoid response elements and its transcriptional activity. In terms of processing, increased proteasome-mediated degradation in response to glucocorticoids. Post-translationally, phosphorylated in the absence of hormone; becomes hyperphosphorylated in the presence of glucocorticoid. The Ser-203, Ser-226 and Ser-404-phosphorylated forms are mainly cytoplasmic, and the Ser-211-phosphorylated form is nuclear. Phosphorylation at Ser-211 increases transcriptional activity. Phosphorylation at Ser-203, Ser-226 and Ser-404 decreases signaling capacity. Phosphorylation at Ser-404 may protect from glucocorticoid-induced apoptosis. Phosphorylation at Ser-203 and Ser-211 is not required in regulation of chromosome segregation. May be dephosphorylated by PPP5C, attenuates NR3C1 action. Sumoylation at Lys-277 and Lys-293 negatively regulates its transcriptional activity. Sumoylation at Lys-702 positively regulates its transcriptional activity in the presence of RWDD3. Sumoylation at Lys-277 and Lys-293 is dispensable whereas sumoylation at Lys-702 is critical for the stimulatory effect of RWDD3 on its transcriptional activity. Heat shock increases sumoylation in a RWDD3-dependent manner. In terms of processing, ubiquitinated by UBR5, leading to its degradation: UBR5 specifically recognizes and binds ligand-bound NR3C1 when it is not associated with coactivators (NCOAs). In presence of NCOAs, the UBR5-degron is not accessible, preventing its ubiquitination and degradation.

The protein resides in the cytoplasm. It is found in the nucleus. The protein localises to the mitochondrion. Its subcellular location is the cytoskeleton. It localises to the spindle. The protein resides in the microtubule organizing center. It is found in the centrosome. The protein localises to the chromosome. Its subcellular location is the nucleoplasm. Receptor for glucocorticoids (GC). Has a dual mode of action: as a transcription factor that binds to glucocorticoid response elements (GRE), both for nuclear and mitochondrial DNA, and as a modulator of other transcription factors. Affects inflammatory responses, cellular proliferation and differentiation in target tissues. Involved in chromatin remodeling. Plays a role in rapid mRNA degradation by binding to the 5' UTR of target mRNAs and interacting with PNRC2 in a ligand-dependent manner which recruits the RNA helicase UPF1 and the mRNA-decapping enzyme DCP1A, leading to RNA decay. Could act as a coactivator for STAT5-dependent transcription upon growth hormone (GH) stimulation and could reveal an essential role of hepatic GR in the control of body growth. Mediates glucocorticoid-induced apoptosis. Promotes accurate chromosome segregation during mitosis. May act as a tumor suppressor. May play a negative role in adipogenesis through the regulation of lipolytic and antilipogenic gene expression. The chain is Glucocorticoid receptor (NR3C1) from Tupaia belangeri (Common tree shrew).